Here is a 468-residue protein sequence, read N- to C-terminus: F-box/LRR-repeat protein At4g14096 (468 aa).

In terms of domain architecture, F-box spans R7–P60. LRR repeat units follow at residues V114–S136, T138–S167, Y169–D194, S216–D241, T292–S323, and N324–G349.

The protein is F-box/LRR-repeat protein At4g14096 of Arabidopsis thaliana (Mouse-ear cress).